Reading from the N-terminus, the 465-residue chain is Ribulose bisphosphate carboxylase large chain (465 aa).

Lys-4 is modified (N6,N6,N6-trimethyllysine). Positions 113 and 163 each coordinate substrate. The active-site Proton acceptor is the Lys-165. Lys-167 contacts substrate. Mg(2+) contacts are provided by Lys-191, Asp-193, and Glu-194. Lys-191 carries the N6-carboxylysine modification. The active-site Proton acceptor is His-284. Substrate is bound by residues Arg-285, His-317, and Ser-369.

This sequence belongs to the RuBisCO large chain family. Type I subfamily. As to quaternary structure, heterohexadecamer of 8 large chains and 8 small chains; disulfide-linked. The disulfide link is formed within the large subunit homodimers. Requires Mg(2+) as cofactor. Post-translationally, the disulfide bond which can form in the large chain dimeric partners within the hexadecamer appears to be associated with oxidative stress and protein turnover.

It is found in the plastid. Its subcellular location is the chloroplast. The enzyme catalyses 2 (2R)-3-phosphoglycerate + 2 H(+) = D-ribulose 1,5-bisphosphate + CO2 + H2O. It catalyses the reaction D-ribulose 1,5-bisphosphate + O2 = 2-phosphoglycolate + (2R)-3-phosphoglycerate + 2 H(+). RuBisCO catalyzes two reactions: the carboxylation of D-ribulose 1,5-bisphosphate, the primary event in carbon dioxide fixation, as well as the oxidative fragmentation of the pentose substrate in the photorespiration process. Both reactions occur simultaneously and in competition at the same active site. The sequence is that of Ribulose bisphosphate carboxylase large chain from Eucommia ulmoides (Hardy rubber tree).